A 193-amino-acid chain; its full sequence is Hydroxyacylglutathione hydrolase-like protein (193 aa).

Zn(2+) is bound by residues H54, H56, D58, H59, and H110.

The protein belongs to the metallo-beta-lactamase superfamily. Glyoxalase II family. It depends on Zn(2+) as a cofactor.

Functionally, hydrolase acting on ester bonds. In Bos taurus (Bovine), this protein is Hydroxyacylglutathione hydrolase-like protein (HAGHL).